The chain runs to 101 residues: Citrate lyase acyl carrier protein (101 aa).

Ser-14 is subject to O-(phosphoribosyl dephospho-coenzyme A)serine.

This sequence belongs to the CitD family. Oligomer with a subunit composition of (alpha,beta,gamma)6.

Its subcellular location is the cytoplasm. Its function is as follows. Covalent carrier of the coenzyme of citrate lyase. This Clostridium perfringens (strain 13 / Type A) protein is Citrate lyase acyl carrier protein.